The chain runs to 483 residues: Glycogen synthase (483 aa).

Residue K18 participates in ADP-alpha-D-glucose binding.

This sequence belongs to the glycosyltransferase 1 family. Bacterial/plant glycogen synthase subfamily.

The catalysed reaction is [(1-&gt;4)-alpha-D-glucosyl](n) + ADP-alpha-D-glucose = [(1-&gt;4)-alpha-D-glucosyl](n+1) + ADP + H(+). Its pathway is glycan biosynthesis; glycogen biosynthesis. Its function is as follows. Synthesizes alpha-1,4-glucan chains using ADP-glucose. This Rhodopseudomonas palustris (strain TIE-1) protein is Glycogen synthase.